The sequence spans 245 residues: 1-(5-phosphoribosyl)-5-[(5-phosphoribosylamino)methylideneamino] imidazole-4-carboxamide isomerase (245 aa).

Aspartate 8 (proton acceptor) is an active-site residue. Aspartate 130 acts as the Proton donor in catalysis.

The protein belongs to the HisA/HisF family.

The protein localises to the cytoplasm. The enzyme catalyses 1-(5-phospho-beta-D-ribosyl)-5-[(5-phospho-beta-D-ribosylamino)methylideneamino]imidazole-4-carboxamide = 5-[(5-phospho-1-deoxy-D-ribulos-1-ylimino)methylamino]-1-(5-phospho-beta-D-ribosyl)imidazole-4-carboxamide. It participates in amino-acid biosynthesis; L-histidine biosynthesis; L-histidine from 5-phospho-alpha-D-ribose 1-diphosphate: step 4/9. The chain is 1-(5-phosphoribosyl)-5-[(5-phosphoribosylamino)methylideneamino] imidazole-4-carboxamide isomerase from Pseudomonas syringae pv. tomato (strain ATCC BAA-871 / DC3000).